The primary structure comprises 302 residues: Oxygen-dependent coproporphyrinogen-III oxidase (302 aa).

Substrate is bound at residue Ser94. The a divalent metal cation site is built by His98 and His108. Catalysis depends on His108, which acts as the Proton donor. Asn110–Arg112 provides a ligand contact to substrate. A divalent metal cation contacts are provided by His147 and His177. The segment at Tyr242–Gln277 is important for dimerization. Gly260–Arg262 is a substrate binding site.

The protein belongs to the aerobic coproporphyrinogen-III oxidase family. As to quaternary structure, homodimer. A divalent metal cation is required as a cofactor.

The protein localises to the cytoplasm. It catalyses the reaction coproporphyrinogen III + O2 + 2 H(+) = protoporphyrinogen IX + 2 CO2 + 2 H2O. It participates in porphyrin-containing compound metabolism; protoporphyrin-IX biosynthesis; protoporphyrinogen-IX from coproporphyrinogen-III (O2 route): step 1/1. In terms of biological role, involved in the heme biosynthesis. Catalyzes the aerobic oxidative decarboxylation of propionate groups of rings A and B of coproporphyrinogen-III to yield the vinyl groups in protoporphyrinogen-IX. The sequence is that of Oxygen-dependent coproporphyrinogen-III oxidase from Shewanella oneidensis (strain ATCC 700550 / JCM 31522 / CIP 106686 / LMG 19005 / NCIMB 14063 / MR-1).